The chain runs to 172 residues: Ribosome maturation factor RimM (172 aa).

Residues 96 to 168 (EGEFYYHQII…RVDVELMEGL (73 aa)) enclose the PRC barrel domain.

Belongs to the RimM family. In terms of assembly, binds ribosomal protein uS19.

It is found in the cytoplasm. Its function is as follows. An accessory protein needed during the final step in the assembly of 30S ribosomal subunit, possibly for assembly of the head region. Essential for efficient processing of 16S rRNA. May be needed both before and after RbfA during the maturation of 16S rRNA. It has affinity for free ribosomal 30S subunits but not for 70S ribosomes. In Streptococcus pyogenes serotype M1, this protein is Ribosome maturation factor RimM.